Consider the following 122-residue polypeptide: Anti-sigma-F factor antagonist RsfB (122 aa).

An STAS domain is found at 7-115; sequence ITVTVADHNG…STLHDALTGV (109 aa). Ser61 carries the phosphoserine modification.

It belongs to the anti-sigma-factor antagonist family. In terms of assembly, interacts with anti-sigma-F factor RsbW (UsfX). Its phosphorylation may prevent this interaction. In terms of processing, putative phosphorylation on Ser-61 may prevent interaction with RsbW.

Its function is as follows. Positive regulator of sigma-F (SigF) activity. Binds to anti-sigma-F factor RsbW (UsfX) preventing its binding to SigF, thus activating transcription. This chain is Anti-sigma-F factor antagonist RsfB (rsfB), found in Mycobacterium tuberculosis (strain CDC 1551 / Oshkosh).